A 461-amino-acid polypeptide reads, in one-letter code: MDYSYDEDLDELCPVCGDKVSGYHYGLLTCESCKGFFKRTVQNNKHYTCTESQSCKIDKTQRKRCPFCRFQKCLTVGMRLEAVRADRMRGGRNKFGPMYKRDRALKQQKKAQIRANGFKLETGPPMGVPPPPPPAPDYVLPPSLHGPEPKGLAAGPPAGPLGDFGAPALPMAVPGAHGPLAGYLYPAFPGRAIKSEYPEPYASPPQPGLPYGYPEPFSGGPNVPELILQLLQLEPDEDQVRARILGCLQEPTKSRPDQPAAFGLLCRMADQTFISIVDWARRCMVFKELEVADQMTLLQNCWSELLVFDHIYRQVQHGKEGSILLVTGQEVELTTVATQAGSLLHSLVLRAQELVLQLLALQLDRQEFVCLKFIILFSLDLKFLNNHILVKDAQEKANAALLDYTLCHYPHCGDKFQQLLLCLVEVRALSMQAKEYLYHKHLGNEMPRNNLLIEMLQAKQT.

Residues 10-85 constitute a DNA-binding region (nuclear receptor); that stretch reads DELCPVCGDK…VGMRLEAVRA (76 aa). Residues 13–33 form an NR C4-type zinc finger; sequence CPVCGDKVSGYHYGLLTCESC. N6-acetyllysine occurs at positions 34, 38, and 72. An NR C4-type zinc finger spans residues 49–73; it reads CTESQSCKIDKTQRKRCPFCRFQKC. Lysine 119 is covalently cross-linked (Glycyl lysine isopeptide (Lys-Gly) (interchain with G-Cter in SUMO)). Residues 119–157 are disordered; it reads KLETGPPMGVPPPPPPAPDYVLPPSLHGPEPKGLAAGPP. The segment covering 126 to 136 has biased composition (pro residues); that stretch reads MGVPPPPPPAP. A Glycyl lysine isopeptide (Lys-Gly) (interchain with G-Cter in SUMO) cross-link involves residue lysine 194. Serine 203 is modified (phosphoserine; by CDK7). An NR LBD domain is found at 222–459; the sequence is NVPELILQLL…NLLIEMLQAK (238 aa). The important for dimerization stretch occupies residues 230–461; the sequence is LLQLEPDEDQ…LIEMLQAKQT (232 aa). A 1,2-diacyl-sn-glycero-3-phosphocholine contacts are provided by glycine 341, tyrosine 436, and lysine 440. 3 residues coordinate a 1,2-diacylglycero-3-phosphoethanolamine: glycine 341, tyrosine 436, and lysine 440.

This sequence belongs to the nuclear hormone receptor family. NR5 subfamily. As to quaternary structure, binds DNA as a monomer. Interacts with NR0B2 and PPARGC1A. Part of a complex consisting of SFPQ, NONO and NR5A1. Interacts with NCOA2. Interacts with DGKQ and CDK7. Binds to and activated by HIPK3. Post-translationally, acetylation stimulates the transcriptional activity. In terms of processing, sumoylation reduces CDK7-mediated phosphorylation on Ser-203. Phosphorylated on Ser-203 by CDK7. This phosphorylation promotes transcriptional activity. High expressed in the adrenal cortex, the ovary, the testis, and the spleen.

It localises to the nucleus. Its function is as follows. Transcriptional activator. Essential for sexual differentiation and formation of the primary steroidogenic tissues. Binds to the Ad4 site found in the promoter region of steroidogenic P450 genes such as CYP11A, CYP11B and CYP21B. Also regulates the AMH/Muellerian inhibiting substance gene as well as the AHCH and STAR genes. 5'-YCAAGGYC-3' and 5'-RRAGGTCA-3' are the consensus sequences for the recognition by NR5A1. The SFPQ-NONO-NR5A1 complex binds to the CYP17 promoter and regulates basal and cAMP-dependent transcriptional activity. Binds phosphatidylcholine. Binds phospholipids with a phosphatidylinositol (PI) headgroup, in particular PI(3,4)P2 and PI(3,4,5)P3. Activated by the phosphorylation of NR5A1 by HIPK3 leading to increased steroidogenic gene expression upon cAMP signaling pathway stimulation. The sequence is that of Steroidogenic factor 1 (NR5A1) from Homo sapiens (Human).